We begin with the raw amino-acid sequence, 206 residues long: Dephospho-CoA kinase (206 aa).

The region spanning 4 to 200 (IVALTGGIGS…AYYLQLASQF (197 aa)) is the DPCK domain. Residue 12–17 (GSGKST) coordinates ATP.

The protein belongs to the CoaE family.

The protein resides in the cytoplasm. The enzyme catalyses 3'-dephospho-CoA + ATP = ADP + CoA + H(+). It functions in the pathway cofactor biosynthesis; coenzyme A biosynthesis; CoA from (R)-pantothenate: step 5/5. In terms of biological role, catalyzes the phosphorylation of the 3'-hydroxyl group of dephosphocoenzyme A to form coenzyme A. This Escherichia coli O6:H1 (strain CFT073 / ATCC 700928 / UPEC) protein is Dephospho-CoA kinase.